A 357-amino-acid polypeptide reads, in one-letter code: DNA replication and repair protein RecF (357 aa).

Position 31–38 (31–38 (GQNGAGKT)) interacts with ATP.

This sequence belongs to the RecF family.

It localises to the cytoplasm. Its function is as follows. The RecF protein is involved in DNA metabolism; it is required for DNA replication and normal SOS inducibility. RecF binds preferentially to single-stranded, linear DNA. It also seems to bind ATP. The sequence is that of DNA replication and repair protein RecF from Coxiella burnetii (strain CbuG_Q212) (Coxiella burnetii (strain Q212)).